Reading from the N-terminus, the 137-residue chain is uncharacterized protein (137 aa).

The region spanning 4-118 (YEGNCLCKAI…CIDDKPDCYD (115 aa)) is the CENP-V/GFA domain. Positions 8, 10, 27, 29, 32, 71, and 74 each coordinate Zn(2+).

It belongs to the Gfa family. It depends on Zn(2+) as a cofactor.

It is found in the cytoplasm. Its subcellular location is the nucleus. This is an uncharacterized protein from Schizosaccharomyces pombe (strain 972 / ATCC 24843) (Fission yeast).